We begin with the raw amino-acid sequence, 454 residues long: Bifunctional protein GlmU (454 aa).

Residues 1-226 are pyrophosphorylase; that stretch reads MLAVAVLAAG…PDEVNGINNR (226 aa). UDP-N-acetyl-alpha-D-glucosamine is bound by residues 7–10, Lys21, Gln73, and 78–79; these read LAAG and GT. Asp103 lines the Mg(2+) pocket. UDP-N-acetyl-alpha-D-glucosamine-binding residues include Gly140, Glu155, Asn170, and Asn224. Mg(2+) is bound at residue Asn224. Positions 227-247 are linker; sequence RQLAQCEGVLQQRLRDHWMDE. Residues 248 to 454 form an N-acetyltransferase region; the sequence is GVTFVDPASC…WDRNTQAAQS (207 aa). UDP-N-acetyl-alpha-D-glucosamine contacts are provided by Arg329 and Lys347. His359 acts as the Proton acceptor in catalysis. UDP-N-acetyl-alpha-D-glucosamine-binding residues include Tyr362 and Asn373. Ala376, Ala419, and Arg436 together coordinate acetyl-CoA.

This sequence in the N-terminal section; belongs to the N-acetylglucosamine-1-phosphate uridyltransferase family. It in the C-terminal section; belongs to the transferase hexapeptide repeat family. As to quaternary structure, homotrimer. The cofactor is Mg(2+).

Its subcellular location is the cytoplasm. It carries out the reaction alpha-D-glucosamine 1-phosphate + acetyl-CoA = N-acetyl-alpha-D-glucosamine 1-phosphate + CoA + H(+). The enzyme catalyses N-acetyl-alpha-D-glucosamine 1-phosphate + UTP + H(+) = UDP-N-acetyl-alpha-D-glucosamine + diphosphate. It functions in the pathway nucleotide-sugar biosynthesis; UDP-N-acetyl-alpha-D-glucosamine biosynthesis; N-acetyl-alpha-D-glucosamine 1-phosphate from alpha-D-glucosamine 6-phosphate (route II): step 2/2. It participates in nucleotide-sugar biosynthesis; UDP-N-acetyl-alpha-D-glucosamine biosynthesis; UDP-N-acetyl-alpha-D-glucosamine from N-acetyl-alpha-D-glucosamine 1-phosphate: step 1/1. Its pathway is bacterial outer membrane biogenesis; LPS lipid A biosynthesis. Functionally, catalyzes the last two sequential reactions in the de novo biosynthetic pathway for UDP-N-acetylglucosamine (UDP-GlcNAc). The C-terminal domain catalyzes the transfer of acetyl group from acetyl coenzyme A to glucosamine-1-phosphate (GlcN-1-P) to produce N-acetylglucosamine-1-phosphate (GlcNAc-1-P), which is converted into UDP-GlcNAc by the transfer of uridine 5-monophosphate (from uridine 5-triphosphate), a reaction catalyzed by the N-terminal domain. The chain is Bifunctional protein GlmU from Synechococcus sp. (strain CC9311).